The following is a 289-amino-acid chain: ATP synthase gamma chain (289 aa).

It belongs to the ATPase gamma chain family. In terms of assembly, F-type ATPases have 2 components, CF(1) - the catalytic core - and CF(0) - the membrane proton channel. CF(1) has five subunits: alpha(3), beta(3), gamma(1), delta(1), epsilon(1). CF(0) has three main subunits: a, b and c.

It localises to the cell inner membrane. Its function is as follows. Produces ATP from ADP in the presence of a proton gradient across the membrane. The gamma chain is believed to be important in regulating ATPase activity and the flow of protons through the CF(0) complex. The protein is ATP synthase gamma chain of Halorhodospira halophila (strain DSM 244 / SL1) (Ectothiorhodospira halophila (strain DSM 244 / SL1)).